The following is a 285-amino-acid chain: Inositol monophosphatase 1 (285 aa).

Glu-73, Asp-93, Ile-95, and Asp-96 together coordinate Mg(2+). Glu-73 provides a ligand contact to substrate. Substrate contacts are provided by residues Ile-95–Thr-98, Gly-198–Ala-200, Glu-217, and Asp-224. Asp-224 lines the Mg(2+) pocket.

The protein belongs to the inositol monophosphatase superfamily. As to quaternary structure, homodimer. Requires Mg(2+) as cofactor.

It is found in the cytoplasm. The catalysed reaction is a myo-inositol phosphate + H2O = myo-inositol + phosphate. The enzyme catalyses 1D-myo-inositol 1-phosphate + H2O = myo-inositol + phosphate. It carries out the reaction 1D-myo-inositol 2-phosphate + H2O = myo-inositol + phosphate. It catalyses the reaction 1D-myo-inositol 3-phosphate + H2O = myo-inositol + phosphate. The catalysed reaction is 1D-myo-inositol 4-phosphate + H2O = myo-inositol + phosphate. The enzyme catalyses 1D-myo-inositol 5-phosphate + H2O = myo-inositol + phosphate. It carries out the reaction 1D-myo-inositol 6-phosphate + H2O = myo-inositol + phosphate. It catalyses the reaction scyllo-inositol 1-phosphate + H2O = scyllo-inositol + phosphate. The catalysed reaction is alpha-D-galactose 1-phosphate + H2O = D-galactose + phosphate. The enzyme catalyses alpha-D-glucose 1-phosphate + H2O = D-glucose + phosphate. It carries out the reaction D-glucose 6-phosphate + H2O = D-glucose + phosphate. It catalyses the reaction beta-D-fructose 1-phosphate + H2O = D-fructose + phosphate. The catalysed reaction is glycerol 2-phosphate + H2O = glycerol + phosphate. The enzyme catalyses adenosine 2'-phosphate + H2O = adenosine + phosphate. It functions in the pathway polyol metabolism; myo-inositol biosynthesis; myo-inositol from D-glucose 6-phosphate: step 2/2. Inhibited by Li(+), Ca(2+) and Mn(2+), but also by Mg(2+) at concentrations above 3 mM. Phosphatase involved in the dephosphorylation of myo-inositol monophosphate to generate myo-inositol. Is also able to dephosphorylate scyllo-inositol-phosphate, myo-inositol 1,4-diphosphate, scyllo-inositol-1,3-diphosphate and scyllo-inositol-1,4-diphosphate. Also dephosphorylates in vitro other sugar-phosphates including D-galactose-1-phosphate, glucose-1-phosphate, glucose-6-phosphate, fructose-1-phosphate, beta-glycerophosphate and 2'-AMP. Responsible for the provision of inositol required for synthesis of phosphatidylinositol and polyphosphoinositides, and involved in maintaining normal brain function. Has been implicated as the pharmacological target for lithium Li(+) action in brain. The chain is Inositol monophosphatase 1 (impa1) from Xenopus laevis (African clawed frog).